Reading from the N-terminus, the 1140-residue chain is MHRRSSGSSPDADDAEDSLASRSSEPSHGCELPEKPLPEIARTGTSIDLRRDTNGKSTPRSRNSSTWRTLSSATTTWASHDPPRYPAVMITPQRLAIEASPDSPHRSRLARLRSPWSCSILTALTTILACVFLFSIVRSFSALQTGSDGCGVPVMSPTFLRMVGFDTEHTRFASKYNLFLYREEGVDPYNHENLGLNGAPVLFLPGNAGSYRQVRSLAAEASRHYAQVVQHDQERLRAGTRSLDFFMIDFNEDMAAFHGQTLLDQAEYVNEAVAYILSLYHDPRRTRRDADLPDPSSVILIGHSMGGIVARTALTMANYQENSVNTIITMSAPHAKAPVSFDSDIVHTYKQINDYWREAYSQTWANNNPLWHVTLISIAGGSRDTVVPSDYASISSLVPETHGFTVFTSTMPDVWIGVDHLSITWCDQFRKAIIKSLFDVVDVRRASQTKPRAERMRIFKKWYLTGLESVSERMLTRNEPSTLVTLEDHTNTILAQGQRLVLRELGHRTGPNVHLLPVPPQGVSGKKFTLLTDQRLDRTGEQGSLEVLFCSVFPLHNGKASSVFALNMDSSDSSGSTRLACKNAAVDEIHLPASTRTSRNAYDRARPFSYLQYDLEDLAEHQFVAVVDKARVPMKGWAIAEFSDSSDALIKARIGLGGLLSAGLKVRLPANRPMLTEVRIPALYSSLLDYKLRVVRHHQAGDPRELFAPLLRQSIADPHESKFFVNVDKVNVNLHGLAPYMPPPLRQTSQNGVSFQLWTDPTCDSTVDITLTVDIVSSLGELVMRYRTVFAAFPLLVVSLTLRKQFQVYDETGFFITFAEGLDSALRSSMPALLLAMSLLASSLATSTKLPTGDDPFHWATNSTETPIDFTKNDLLLGSQDAFFWFLVPLFGLICVGVCVLLNYVALIVLQILSVVYGLWNSKSGYIRRDEKGYLPVFPAPSPRRRMIKMGVLLVLVSTAIPYQFAYLVACIVQLATCVRAQWHAKETRSTAHYNFANYAYSVFILMLWVLPINILVLLVWAHNLVVHWFMPFSSHHNVLSIMPFIILVETMTTGSMIPRVTTRFKHVTSVLLFCIAVYSAVYGVSYAYISHHLVNILAGWLVSIYFFRSGFSLHRFWKIVEGDETPSTPESGSHMKKKP.

Residues 1 to 84 (MHRRSSGSSP…TTWASHDPPR (84 aa)) are disordered. A compositionally biased stretch (polar residues) spans 55–78 (GKSTPRSRNSSTWRTLSSATTTWA). Asn63 is a glycosylation site (N-linked (GlcNAc...) asparagine). Residues 117–137 (SCSILTALTTILACVFLFSIV) form a helical membrane-spanning segment. Residue Ser304 is part of the active site. Residues 782-802 (LVMRYRTVFAAFPLLVVSLTL) traverse the membrane as a helical segment. N-linked (GlcNAc...) asparagine glycosylation occurs at Asn862. The next 7 membrane-spanning stretches (helical) occupy residues 882-902 (AFFW…CVLL), 905-925 (VALI…SKSG), 952-972 (VLLV…VACI), 1002-1022 (SVFI…LVWA), 1039-1059 (VLSI…SMIP), 1070-1090 (SVLL…YAYI), and 1094-1114 (LVNI…GFSL).

The protein belongs to the GPI inositol-deacylase family.

It is found in the endoplasmic reticulum membrane. Its function is as follows. Involved in inositol deacylation of GPI-anchored proteins which plays important roles in the quality control and ER-associated degradation of GPI-anchored proteins. The polypeptide is GPI inositol-deacylase (bst1) (Emericella nidulans (strain FGSC A4 / ATCC 38163 / CBS 112.46 / NRRL 194 / M139) (Aspergillus nidulans)).